The following is a 1362-amino-acid chain: Dicer-like protein 2-2 (1362 aa).

Residues 30–197 (MLNESLKRNL…EIVESNLGSI (168 aa)) enclose the Helicase ATP-binding domain. Residue 43–50 (MPTGTGKT) participates in ATP binding. The DEAH box motif lies at 139–142 (DEAH). A Helicase C-terminal domain is found at 343-505 (LLDELSKAYR…KLQNAERRQI (163 aa)). The Dicer dsRNA-binding fold domain maps to 536–630 (AVGYLYNFCS…VPTQVSDHLE (95 aa)). RNase III domains lie at 889–1033 (AQIL…TDGG) and 1075–1258 (IVDM…IDSQ).

Belongs to the helicase family. Dicer subfamily.

Functionally, dicer-like endonuclease involved in cleaving double-stranded RNA in the RNA interference (RNAi) pathway. Produces 21 to 25 bp dsRNAs (siRNAs) which target the selective destruction of homologous RNAs leading to sequence-specific suppression of gene expression, called post-transcriptional gene silencing (PTGS). Part of a broad host defense response against viral infection and transposons. This Aspergillus niger (strain ATCC MYA-4892 / CBS 513.88 / FGSC A1513) protein is Dicer-like protein 2-2 (dcl2-2).